A 438-amino-acid polypeptide reads, in one-letter code: Serine--tRNA ligase (438 aa).

Residue 245–247 (TSE) participates in L-serine binding. ATP is bound at residue 276-278 (RSE). Residue E299 participates in L-serine binding. 363–366 (EISS) is an ATP binding site. An L-serine-binding site is contributed by S398.

It belongs to the class-II aminoacyl-tRNA synthetase family. Type-1 seryl-tRNA synthetase subfamily. As to quaternary structure, homodimer. The tRNA molecule binds across the dimer.

It localises to the cytoplasm. The catalysed reaction is tRNA(Ser) + L-serine + ATP = L-seryl-tRNA(Ser) + AMP + diphosphate + H(+). It carries out the reaction tRNA(Sec) + L-serine + ATP = L-seryl-tRNA(Sec) + AMP + diphosphate + H(+). It participates in aminoacyl-tRNA biosynthesis; selenocysteinyl-tRNA(Sec) biosynthesis; L-seryl-tRNA(Sec) from L-serine and tRNA(Sec): step 1/1. Catalyzes the attachment of serine to tRNA(Ser). Is also able to aminoacylate tRNA(Sec) with serine, to form the misacylated tRNA L-seryl-tRNA(Sec), which will be further converted into selenocysteinyl-tRNA(Sec). In Verminephrobacter eiseniae (strain EF01-2), this protein is Serine--tRNA ligase.